The following is a 338-amino-acid chain: Tetraacyldisaccharide 4'-kinase (338 aa).

Residue 66–73 (IAGGAGKT) participates in ATP binding.

Belongs to the LpxK family.

The catalysed reaction is a lipid A disaccharide + ATP = a lipid IVA + ADP + H(+). Its pathway is glycolipid biosynthesis; lipid IV(A) biosynthesis; lipid IV(A) from (3R)-3-hydroxytetradecanoyl-[acyl-carrier-protein] and UDP-N-acetyl-alpha-D-glucosamine: step 6/6. Transfers the gamma-phosphate of ATP to the 4'-position of a tetraacyldisaccharide 1-phosphate intermediate (termed DS-1-P) to form tetraacyldisaccharide 1,4'-bis-phosphate (lipid IVA). The sequence is that of Tetraacyldisaccharide 4'-kinase from Delftia acidovorans (strain DSM 14801 / SPH-1).